Here is a 1273-residue protein sequence, read N- to C-terminus: DNA gyrase subunit A (1273 aa).

The region spanning 42–931 (LPEVRDGLKP…VDGDVNDEDL (890 aa)) is the Topo IIA-type catalytic domain. The O-(5'-phospho-DNA)-tyrosine intermediate role is filled by tyrosine 130. Positions 256–396 (LFGAFISGGF…VQQMLLEFGV (141 aa)) constitute a DOD-type homing endonuclease domain. A GyrA-box motif is present at residues 958–964 (QKRGGKG).

It belongs to the type II topoisomerase GyrA/ParC subunit family. As to quaternary structure, heterotetramer, composed of two GyrA and two GyrB chains. In the heterotetramer, GyrA contains the active site tyrosine that forms a transient covalent intermediate with the DNA, while GyrB binds cofactors catalyzes ATP hydrolysis. This protein undergoes a protein self splicing that involves a post-translational excision of the intervening region (intein) followed by peptide ligation.

It localises to the cytoplasm. The enzyme catalyses ATP-dependent breakage, passage and rejoining of double-stranded DNA.. DNA supercoiling is inhibited by fluoroquinolones; IC(50) 1 ug/ml for sitafloxacin. A type II topoisomerase that negatively supercoils closed circular double-stranded (ds) DNA in an ATP-dependent manner to modulate DNA topology and maintain chromosomes in an underwound state. Negative supercoiling favors strand separation, and DNA replication, transcription, recombination and repair, all of which involve strand separation. Also able to catalyze the interconversion of other topological isomers of dsDNA rings, including catenanes and knotted rings. Type II topoisomerases break and join 2 DNA strands simultaneously in an ATP-dependent manner. This chain is DNA gyrase subunit A, found in Mycobacterium leprae (strain TN).